Consider the following 496-residue polypeptide: Gasdermin-E (496 aa).

The segment at 1 to 56 (MFAKATRNFLREVDADGDLIAVSNLNDSDKLQLLSLVTKKKRFWCWQRPKYQFLSL) is membrane targeting domain. Position 45 is an S-(2-succinyl)cysteine (cysteine 45). Residue lysine 120 forms a Glycyl lysine isopeptide (Lys-Gly) (interchain with G-Cter in ubiquitin) linkage. 3 positions are modified to S-(2-succinyl)cysteine: cysteine 156, cysteine 168, and cysteine 180. Lysine 189 is covalently cross-linked (Glycyl lysine isopeptide (Lys-Gly) (interchain with G-Cter in ubiquitin)). An S-(2-succinyl)cysteine mark is found at cysteine 235, cysteine 371, cysteine 408, cysteine 417, and cysteine 489.

This sequence belongs to the gasdermin family. As to quaternary structure, homooligomer; homooligomeric ring-shaped pore complex containing 27-28 subunits when inserted in the membrane. Cleavage at Asp-270 by CASP3 (mature and uncleaved precursor forms) or granzyme B (GZMB) relieves autoinhibition and is sufficient to initiate pyroptosis. In terms of processing, succination by the Krebs cycle intermediate fumarate, which leads to S-(2-succinyl)cysteine residues, inhibits processing by caspases, and ability to initiate pyroptosis. Succination modification is catalyzed by a non-enzymatic reaction caused by an accumulation of fumarate. Post-translationally, ubiquitinated at Lys-120 and Lys-189 via 'Lys-48'-linked polyubiquitin chains, leading to proteasomal degradation. Deubiquitinated by USP48, leading to increased stability. Palmitoylated. Expressed in cochlea. Low level of expression in heart, brain, placenta, lung, liver, skeletal muscle, kidney and pancreas, with highest expression in placenta.

Its subcellular location is the cell membrane. The protein resides in the cytoplasm. It localises to the cytosol. With respect to regulation, the full-length protein before cleavage is inactive: intramolecular interactions between N- and C-terminal domains mediate autoinhibition in the absence of activation signal. The intrinsic pyroptosis-inducing activity is carried by the released N-terminal moiety (Gasdermin-E, N-terminal) following cleavage by CASP3 or granzyme B (GZMB). Activated by NLRP1 in the absence of GSDMD expression: NLRP1 cleaves and activates CASP8, promoting downstream activation of CASP3 and subsequent activation of GSDME. Its activity is regulated as follows. (Microbial infection) Activated upon human coronavirus SARS-CoV-2 infection, leading to lung epithelial cell death. Activation takes place in response to (1) activation of NLRP1 and (2) inactivation of GSDMD following NLRP1 and GSDMD cleavage by the SARS-CoV-2 3C-like proteinase nsp5. In terms of biological role, precursor of a pore-forming protein that converts non-inflammatory apoptosis to pyroptosis. This form constitutes the precursor of the pore-forming protein: upon cleavage, the released N-terminal moiety (Gasdermin-E, N-terminal) binds to membranes and forms pores, triggering pyroptosis. Its function is as follows. Pore-forming protein produced by cleavage by CASP3 or granzyme B (GZMB), which converts non-inflammatory apoptosis to pyroptosis or promotes granzyme-mediated pyroptosis, respectively. After cleavage, moves to the plasma membrane, homooligomerizes within the membrane and forms pores of 10-15 nanometers (nm) of inner diameter, allowing the release of mature interleukins (IL1B and IL16) and triggering pyroptosis. Binds to inner leaflet lipids, bisphosphorylated phosphatidylinositols, such as phosphatidylinositol (4,5)-bisphosphate. Cleavage by CASP3 switches CASP3-mediated apoptosis induced by TNF or danger signals, such as chemotherapy drugs, to pyroptosis. Mediates secondary necrosis downstream of the mitochondrial apoptotic pathway and CASP3 activation as well as in response to viral agents. Exhibits bactericidal activity. Cleavage by GZMB promotes tumor suppressor activity by triggering robust anti-tumor immunity. Suppresses tumors by mediating granzyme-mediated pyroptosis in target cells of natural killer (NK) cells: cleavage by granzyme B (GZMB), delivered to target cells from NK-cells, triggers pyroptosis of tumor cells and tumor suppression. May play a role in the p53/TP53-regulated cellular response to DNA damage. Functionally, (Microbial infection) Pore-forming protein, which promotes maternal placental pyroptosis in response to Zika virus infection, contributing to adverse fetal outcomes. This chain is Gasdermin-E, found in Homo sapiens (Human).